Reading from the N-terminus, the 110-residue chain is Thioredoxin (110 aa).

The Thioredoxin domain occupies 3–108; the sequence is KPIEVHDSDF…YREIFDKVLA (106 aa). An intrachain disulfide couples cysteine 32 to cysteine 35. At lysine 105 the chain carries N6,N6-dimethyllysine; alternate. An N6-methyllysine; alternate modification is found at lysine 105.

In terms of biological role, participates in various redox reactions through the reversible oxidation of its active center dithiol to a disulfide and catalyzes dithiol-disulfide exchange reactions. The polypeptide is Thioredoxin (trxA) (Chloroflexus aurantiacus (strain ATCC 29366 / DSM 635 / J-10-fl)).